The primary structure comprises 40 residues: Photosystem II reaction center protein J (40 aa).

A helical transmembrane segment spans residues 8–28 (IPLWLIGTVTGIIVIGLLGIF).

Belongs to the PsbJ family. PSII is composed of 1 copy each of membrane proteins PsbA, PsbB, PsbC, PsbD, PsbE, PsbF, PsbH, PsbI, PsbJ, PsbK, PsbL, PsbM, PsbT, PsbX, PsbY, PsbZ, Psb30/Ycf12, at least 3 peripheral proteins of the oxygen-evolving complex and a large number of cofactors. It forms dimeric complexes.

Its subcellular location is the plastid. It is found in the chloroplast thylakoid membrane. Functionally, one of the components of the core complex of photosystem II (PSII). PSII is a light-driven water:plastoquinone oxidoreductase that uses light energy to abstract electrons from H(2)O, generating O(2) and a proton gradient subsequently used for ATP formation. It consists of a core antenna complex that captures photons, and an electron transfer chain that converts photonic excitation into a charge separation. In Pinus koraiensis (Korean pine), this protein is Photosystem II reaction center protein J.